Here is a 329-residue protein sequence, read N- to C-terminus: Glycerol-3-phosphate dehydrogenase [NAD(P)+] (329 aa).

The NADPH site is built by tryptophan 11, arginine 30, and lysine 103. Sn-glycerol 3-phosphate is bound by residues lysine 103, glycine 132, and serine 134. Residue alanine 136 participates in NADPH binding. Positions 187, 240, 250, 251, and 252 each coordinate sn-glycerol 3-phosphate. Residue lysine 187 is the Proton acceptor of the active site. Residue arginine 251 participates in NADPH binding. NADPH contacts are provided by valine 275 and glutamate 277.

This sequence belongs to the NAD-dependent glycerol-3-phosphate dehydrogenase family.

It is found in the cytoplasm. The catalysed reaction is sn-glycerol 3-phosphate + NAD(+) = dihydroxyacetone phosphate + NADH + H(+). It carries out the reaction sn-glycerol 3-phosphate + NADP(+) = dihydroxyacetone phosphate + NADPH + H(+). It functions in the pathway membrane lipid metabolism; glycerophospholipid metabolism. In terms of biological role, catalyzes the reduction of the glycolytic intermediate dihydroxyacetone phosphate (DHAP) to sn-glycerol 3-phosphate (G3P), the key precursor for phospholipid synthesis. This chain is Glycerol-3-phosphate dehydrogenase [NAD(P)+], found in Dechloromonas aromatica (strain RCB).